The following is a 101-amino-acid chain: Small ribosomal subunit protein uS14A (101 aa).

The disordered stretch occupies residues 29–60; sequence EIIRSPRSTPEQRTAAQNELAHQPRDASAVRV. The segment covering 34-45 has biased composition (polar residues); that stretch reads PRSTPEQRTAAQ.

This sequence belongs to the universal ribosomal protein uS14 family. As to quaternary structure, part of the 30S ribosomal subunit. Contacts proteins S3 and S10.

Functionally, binds 16S rRNA, required for the assembly of 30S particles and may also be responsible for determining the conformation of the 16S rRNA at the A site. The chain is Small ribosomal subunit protein uS14A from Mycolicibacterium paratuberculosis (strain ATCC BAA-968 / K-10) (Mycobacterium paratuberculosis).